A 475-amino-acid chain; its full sequence is CAAX prenyl protease 1 homolog (475 aa).

The Lumenal segment spans residues 1-18 (MGMWASLDALWEMPAEKR). A helical transmembrane segment spans residues 19–39 (IFGAVLLFSWTVYLWETFLAQ). The Nuclear portion of the chain corresponds to 40–81 (RQRRIYKTTTHVPPELGQIMDSETFEKSRLYQLDKSTFSFWS). Residues 82–102 (GLYSETEGTLILLFGGIPYLW) traverse the membrane as a helical segment. Topologically, residues 103-123 (RLSGRFCGYAGFGPEYEITQS) are lumenal. Residues 124-144 (LVFLLLATLFSALTGLPWSLY) form a helical membrane-spanning segment. The Nuclear segment spans residues 145–170 (NTFVIEEKHGFNQQTLGFFMKDAIKK). The chain crosses the membrane as a helical span at residues 171 to 191 (FVVTQCILLPVSSLLLYIIKI). Over 192–195 (GGDY) the chain is Lumenal. The helical transmembrane segment at 196-216 (FFIYAWLFTLVVSLVLVTIYA) threads the bilayer. The Nuclear portion of the chain corresponds to 217–347 (DYIAPLFDKF…GHWKLGHTVK (131 aa)). A Zn(2+)-binding site is contributed by histidine 335. The active site involves glutamate 336. Histidine 339 contributes to the Zn(2+) binding site. The helical transmembrane segment at 348–368 (NIIISQMNSFLCFFLFAVLIG) threads the bilayer. The Lumenal portion of the chain corresponds to 369–382 (RKELFAAFGFYDSQ). A helical transmembrane segment spans residues 383–405 (PTLIGLLIIFQFIFSPYNEVLSF). The Nuclear segment spans residues 406-475 (CLTVLSRRFE…LQALKTMKQH (70 aa)). A Zn(2+)-binding site is contributed by glutamate 415.

The protein belongs to the peptidase M48A family. Zn(2+) is required as a cofactor. As to expression, widely expressed. High levels in kidney, prostate, testis and ovary.

It is found in the endoplasmic reticulum membrane. Its subcellular location is the nucleus inner membrane. It localises to the early endosome membrane. The protein resides in the late endosome membrane. The enzyme catalyses Hydrolyzes the peptide bond -P2-(S-farnesyl or geranylgeranyl)C-P1'-P2'-P3'-COOH where P1' and P2' are amino acids with aliphatic side chains and P3' is any C-terminal residue.. Transmembrane metalloprotease whose catalytic activity is critical for processing lamin A/LMNA on the inner nuclear membrane and clearing clogged translocons on the endoplasmic reticulum. Proteolytically removes the C-terminal three residues of farnesylated proteins. Also plays an antiviral role independently of its protease activity by restricting enveloped RNA and DNA viruses, including influenza A, Zika, Ebola, Sindbis, vesicular stomatitis, cowpox, and vaccinia. Mechanistically, controls IFITM antiviral pathway to hinder viruses from breaching the endosomal barrier by modulating membrane fluidity. This is CAAX prenyl protease 1 homolog from Homo sapiens (Human).